The chain runs to 192 residues: Adenylate kinase (192 aa).

12 to 17 contributes to the ATP binding site; that stretch reads GSGKTT. The interval 34–63 is NMP; that stretch reads STGDLLRAEVASGSELGKTIDSFISKGNLV. Residues Thr-35, Arg-40, 61-63, 88-91, and Gln-95 each bind AMP; these read NLV and GYPR. Residues 130-136 form an LID region; the sequence is GRNRGAD. Arg-131 provides a ligand contact to ATP. The AMP site is built by Arg-133 and Arg-145. Arg-173 is a binding site for ATP.

The protein belongs to the adenylate kinase family. In terms of assembly, monomer.

It localises to the cytoplasm. It catalyses the reaction AMP + ATP = 2 ADP. It functions in the pathway purine metabolism; AMP biosynthesis via salvage pathway; AMP from ADP: step 1/1. Its function is as follows. Catalyzes the reversible transfer of the terminal phosphate group between ATP and AMP. Plays an important role in cellular energy homeostasis and in adenine nucleotide metabolism. The polypeptide is Adenylate kinase (Campylobacter jejuni subsp. jejuni serotype O:6 (strain 81116 / NCTC 11828)).